The following is a 216-amino-acid chain: Large ribosomal subunit protein bL25 (216 aa).

The interval 184–216 (VPPTSDVEEEEGDEDLEEDVEETAAEEEEGVEE) is disordered. Over residues 189–216 (DVEEEEGDEDLEEDVEETAAEEEEGVEE) the composition is skewed to acidic residues.

The protein belongs to the bacterial ribosomal protein bL25 family. CTC subfamily. In terms of assembly, part of the 50S ribosomal subunit; part of the 5S rRNA/L5/L18/L25 subcomplex. Contacts the 5S rRNA. Binds to the 5S rRNA independently of L5 and L18.

Its function is as follows. This is one of the proteins that binds to the 5S RNA in the ribosome where it forms part of the central protuberance. The chain is Large ribosomal subunit protein bL25 from Desulforapulum autotrophicum (strain ATCC 43914 / DSM 3382 / VKM B-1955 / HRM2) (Desulfobacterium autotrophicum).